Consider the following 218-residue polypeptide: Phosphoribosylformylglycinamidine synthase subunit PurQ (218 aa).

The region spanning 2–218 (RVGVIRFPGS…FFRGILKFRG (217 aa)) is the Glutamine amidotransferase type-1 domain. C85 serves as the catalytic Nucleophile. Active-site residues include H192 and E194.

As to quaternary structure, part of the FGAM synthase complex composed of 1 PurL, 1 PurQ and 2 PurS subunits.

It localises to the cytoplasm. The catalysed reaction is N(2)-formyl-N(1)-(5-phospho-beta-D-ribosyl)glycinamide + L-glutamine + ATP + H2O = 2-formamido-N(1)-(5-O-phospho-beta-D-ribosyl)acetamidine + L-glutamate + ADP + phosphate + H(+). The enzyme catalyses L-glutamine + H2O = L-glutamate + NH4(+). It participates in purine metabolism; IMP biosynthesis via de novo pathway; 5-amino-1-(5-phospho-D-ribosyl)imidazole from N(2)-formyl-N(1)-(5-phospho-D-ribosyl)glycinamide: step 1/2. Functionally, part of the phosphoribosylformylglycinamidine synthase complex involved in the purines biosynthetic pathway. Catalyzes the ATP-dependent conversion of formylglycinamide ribonucleotide (FGAR) and glutamine to yield formylglycinamidine ribonucleotide (FGAM) and glutamate. The FGAM synthase complex is composed of three subunits. PurQ produces an ammonia molecule by converting glutamine to glutamate. PurL transfers the ammonia molecule to FGAR to form FGAM in an ATP-dependent manner. PurS interacts with PurQ and PurL and is thought to assist in the transfer of the ammonia molecule from PurQ to PurL. In Methanothermobacter thermautotrophicus (strain ATCC 29096 / DSM 1053 / JCM 10044 / NBRC 100330 / Delta H) (Methanobacterium thermoautotrophicum), this protein is Phosphoribosylformylglycinamidine synthase subunit PurQ.